A 388-amino-acid polypeptide reads, in one-letter code: Alanine racemase (388 aa).

The Proton acceptor; specific for D-alanine role is filled by Lys40. Lys40 is modified (N6-(pyridoxal phosphate)lysine). Position 137 (Arg137) interacts with substrate. The active-site Proton acceptor; specific for L-alanine is the Tyr269. Position 318 (Met318) interacts with substrate.

Belongs to the alanine racemase family. It depends on pyridoxal 5'-phosphate as a cofactor.

The catalysed reaction is L-alanine = D-alanine. It participates in amino-acid biosynthesis; D-alanine biosynthesis; D-alanine from L-alanine: step 1/1. Functionally, catalyzes the interconversion of L-alanine and D-alanine. May also act on other amino acids. The sequence is that of Alanine racemase (alr) from Halalkalibacterium halodurans (strain ATCC BAA-125 / DSM 18197 / FERM 7344 / JCM 9153 / C-125) (Bacillus halodurans).